Reading from the N-terminus, the 880-residue chain is Valine--tRNA ligase (880 aa).

The 'HIGH' region motif lies at 49–59 (PNVTGKLHLGH). Residues 525-529 (KMSKS) carry the 'KMSKS' region motif. Lys-528 serves as a coordination point for ATP. A coiled-coil region spans residues 809–880 (LEGLINIDEE…VEKRIAELKN (72 aa)).

Belongs to the class-I aminoacyl-tRNA synthetase family. ValS type 1 subfamily. As to quaternary structure, monomer.

The protein resides in the cytoplasm. The catalysed reaction is tRNA(Val) + L-valine + ATP = L-valyl-tRNA(Val) + AMP + diphosphate. Functionally, catalyzes the attachment of valine to tRNA(Val). As ValRS can inadvertently accommodate and process structurally similar amino acids such as threonine, to avoid such errors, it has a 'posttransfer' editing activity that hydrolyzes mischarged Thr-tRNA(Val) in a tRNA-dependent manner. This chain is Valine--tRNA ligase, found in Bacillus licheniformis (strain ATCC 14580 / DSM 13 / JCM 2505 / CCUG 7422 / NBRC 12200 / NCIMB 9375 / NCTC 10341 / NRRL NRS-1264 / Gibson 46).